The following is a 123-amino-acid chain: Ig heavy chain V region HPCM6 (123 aa).

In terms of domain architecture, Ig-like spans 1–114; sequence EVKLVESGGG…YPHWYFDVWG (114 aa).

This chain is Ig heavy chain V region HPCM6, found in Mus musculus (Mouse).